Consider the following 319-residue polypeptide: Oxaloacetate tautomerase fahd2, mitochondrial (319 aa).

A mitochondrion-targeting transit peptide spans 1-31 (MLTQTRVALRVLKNAHLTLPKRNISQSPALS). 3 residues coordinate Mg(2+): E164, E166, and D195.

Belongs to the FAH family. Mg(2+) is required as a cofactor. The cofactor is Mn(2+).

The protein localises to the mitochondrion. It catalyses the reaction oxaloacetate = enol-oxaloacetate. In terms of biological role, tautomerase that converts enol-oxaloacetate, a strong inhibitor of succinate dehydrogenase, to the physiological keto form of oxaloacetate. It is thereby required to maximize aerobic respiration efficiency by preventing succinate dehydrogenase inhibition. In Xenopus laevis (African clawed frog), this protein is Oxaloacetate tautomerase fahd2, mitochondrial (fahd2).